Here is a 356-residue protein sequence, read N- to C-terminus: MKREILLERIDKLKQLMPWYVLEYYQSKLAVPYSFTTLYEYLKEYDRFFSWVLESGISNADKISDIPLSVLENMSKKDMESFILYLRERPLLNANTTKQGVSQTTINRTLSALSSLYKYLTEEVENDQGEPYFYRNVMKKVSTKKKKETLAARAENIKQKLFLGDETEGFLTYIDQEHPQQLSNRALSSFNKNKERDLAIIALLLASGVRLSEAVNLDLRDLNLKMMVIDVTRKGGKRDSVNVAAFAKPYLENYLAIRNQRYKTEKTDTALFLTLYRGVPNRIDASSVEKMVAKYSEDFKVRVTPHKLRHTLATRLYDATKSQVLVSHQLGHASTQVTDLYTHIVSDEQKNALDSL.

A Core-binding (CB) domain is found at 16–121 (LMPWYVLEYY…ALSSLYKYLT (106 aa)). The Tyr recombinase domain occupies 169-354 (GFLTYIDQEH…VSDEQKNALD (186 aa)). Catalysis depends on residues Arg210, Lys234, His306, Arg309, and His332. Residue Tyr341 is the O-(3'-phospho-DNA)-tyrosine intermediate of the active site.

The protein belongs to the 'phage' integrase family. XerS subfamily.

It is found in the cytoplasm. FtsK is required for recombination. In terms of biological role, site-specific tyrosine recombinase, which acts by catalyzing the cutting and rejoining of the recombining DNA molecules. Essential to convert dimers of the bacterial chromosome into monomers to permit their segregation at cell division. In Streptococcus pneumoniae (strain 70585), this protein is Tyrosine recombinase XerS.